A 129-amino-acid polypeptide reads, in one-letter code: MRHRYSGRKLGRTSSHRDAMFRNMVTSLFEHERIVTTKEKAKELRPIAEKMITLGKRGDLHARRQALSYVRCAGVVHKLFGEIAEQFADRKGGYTRIIQTGVRRGDNASMAIIELVGYDETVAAATTEA.

The protein belongs to the bacterial ribosomal protein bL17 family. Part of the 50S ribosomal subunit. Contacts protein L32.

The chain is Large ribosomal subunit protein bL17 from Desulfotalea psychrophila (strain LSv54 / DSM 12343).